The sequence spans 347 residues: S-adenosylmethionine:tRNA ribosyltransferase-isomerase (347 aa).

The protein belongs to the QueA family. In terms of assembly, monomer.

Its subcellular location is the cytoplasm. The enzyme catalyses 7-aminomethyl-7-carbaguanosine(34) in tRNA + S-adenosyl-L-methionine = epoxyqueuosine(34) in tRNA + adenine + L-methionine + 2 H(+). It functions in the pathway tRNA modification; tRNA-queuosine biosynthesis. Functionally, transfers and isomerizes the ribose moiety from AdoMet to the 7-aminomethyl group of 7-deazaguanine (preQ1-tRNA) to give epoxyqueuosine (oQ-tRNA). The protein is S-adenosylmethionine:tRNA ribosyltransferase-isomerase of Erythrobacter litoralis (strain HTCC2594).